The primary structure comprises 309 residues: Putative proline iminopeptidase (309 aa).

An AB hydrolase-1 domain is found at 33 to 291 (LYVHGGPGSG…LYVTNNAGHS (259 aa)). Ser-105 functions as the Nucleophile in the catalytic mechanism. The active site involves Asp-262. The active-site Proton donor is His-290.

This sequence belongs to the peptidase S33 family.

The protein localises to the cytoplasm. The catalysed reaction is Release of N-terminal proline from a peptide.. Functionally, specifically catalyzes the removal of N-terminal proline residues from peptides. In Mycoplasma pneumoniae (strain ATCC 29342 / M129 / Subtype 1) (Mycoplasmoides pneumoniae), this protein is Putative proline iminopeptidase (pip).